We begin with the raw amino-acid sequence, 187 residues long: Elongation factor P (187 aa).

This sequence belongs to the elongation factor P family.

The protein localises to the cytoplasm. The protein operates within protein biosynthesis; polypeptide chain elongation. Involved in peptide bond synthesis. Stimulates efficient translation and peptide-bond synthesis on native or reconstituted 70S ribosomes in vitro. Probably functions indirectly by altering the affinity of the ribosome for aminoacyl-tRNA, thus increasing their reactivity as acceptors for peptidyl transferase. This chain is Elongation factor P, found in Parasynechococcus marenigrum (strain WH8102).